The following is a 573-amino-acid chain: Probable zinc metallopeptidase EGY3, chloroplastic (573 aa).

Residues 1–50 (MASLFVSTPSSSLTLKSCHSLHLRRFDRAEFSNFGKASVNQTTRSRHSLR) constitute a chloroplast transit peptide. A disordered region spans residues 38–105 (SVNQTTRSRH…EKKSKQQEMD (68 aa)). Composition is skewed to basic and acidic residues over residues 52–62 (SAEDDRVREPV) and 96–105 (EKKSKQQEMD). A coiled-coil region spans residues 122 to 185 (EAAIKLEKTR…KALDLNKLKS (64 aa)). 7 helical membrane passes run 274–294 (VSAI…SGFF), 305–325 (IANV…SEIA), 376–396 (ASAY…DGSF), 414–434 (PLLS…GNVL), 441–461 (VGVP…VTSL), 493–513 (LLLG…GLFA), and 536–556 (FAWG…NSGG).

This sequence belongs to the peptidase M50B family.

The protein localises to the plastid. It localises to the chloroplast membrane. In terms of biological role, probable membrane-associated metalloprotease that may be involved in chloroplast development. The protein is Probable zinc metallopeptidase EGY3, chloroplastic (EGY3) of Arabidopsis thaliana (Mouse-ear cress).